A 161-amino-acid polypeptide reads, in one-letter code: 2-C-methyl-D-erythritol 2,4-cyclodiphosphate synthase (161 aa).

A divalent metal cation contacts are provided by D8 and H10. Residues 8 to 10 and 34 to 35 each bind 4-CDP-2-C-methyl-D-erythritol 2-phosphate; these read DVH and HS. Residue H42 coordinates a divalent metal cation. 4-CDP-2-C-methyl-D-erythritol 2-phosphate-binding positions include 56 to 58, 61 to 65, 100 to 106, 132 to 135, and F139; these read DIG, FPDTD, AQSPKMA, and TTEE.

The protein belongs to the IspF family. In terms of assembly, homotrimer. A divalent metal cation is required as a cofactor.

The catalysed reaction is 4-CDP-2-C-methyl-D-erythritol 2-phosphate = 2-C-methyl-D-erythritol 2,4-cyclic diphosphate + CMP. Its pathway is isoprenoid biosynthesis; isopentenyl diphosphate biosynthesis via DXP pathway; isopentenyl diphosphate from 1-deoxy-D-xylulose 5-phosphate: step 4/6. Functionally, involved in the biosynthesis of isopentenyl diphosphate (IPP) and dimethylallyl diphosphate (DMAPP), two major building blocks of isoprenoid compounds. Catalyzes the conversion of 4-diphosphocytidyl-2-C-methyl-D-erythritol 2-phosphate (CDP-ME2P) to 2-C-methyl-D-erythritol 2,4-cyclodiphosphate (ME-CPP) with a corresponding release of cytidine 5-monophosphate (CMP). This is 2-C-methyl-D-erythritol 2,4-cyclodiphosphate synthase from Clostridioides difficile (strain 630) (Peptoclostridium difficile).